Consider the following 185-residue polypeptide: Ribosome-recycling factor (185 aa).

It belongs to the RRF family.

Its subcellular location is the cytoplasm. Its function is as follows. Responsible for the release of ribosomes from messenger RNA at the termination of protein biosynthesis. May increase the efficiency of translation by recycling ribosomes from one round of translation to another. The polypeptide is Ribosome-recycling factor (Pseudothermotoga lettingae (strain ATCC BAA-301 / DSM 14385 / NBRC 107922 / TMO) (Thermotoga lettingae)).